Here is a 352-residue protein sequence, read N- to C-terminus: Small ribosomal subunit biogenesis GTPase RsgA (352 aa).

Basic residues predominate over residues Met1 to His15. Residues Met1–His26 form a disordered region. Positions Glu106–Phe274 constitute a CP-type G domain. GTP is bound by residues Asn162–Asp165 and Gly216–Ser224. Cys298, Cys303, His305, and Cys311 together coordinate Zn(2+).

This sequence belongs to the TRAFAC class YlqF/YawG GTPase family. RsgA subfamily. In terms of assembly, monomer. Associates with 30S ribosomal subunit, binds 16S rRNA. Zn(2+) serves as cofactor.

It is found in the cytoplasm. Its function is as follows. One of several proteins that assist in the late maturation steps of the functional core of the 30S ribosomal subunit. Helps release RbfA from mature subunits. May play a role in the assembly of ribosomal proteins into the subunit. Circularly permuted GTPase that catalyzes slow GTP hydrolysis, GTPase activity is stimulated by the 30S ribosomal subunit. The polypeptide is Small ribosomal subunit biogenesis GTPase RsgA (Mannheimia succiniciproducens (strain KCTC 0769BP / MBEL55E)).